Reading from the N-terminus, the 455-residue chain is UDP-N-acetylmuramate--L-alanine ligase (455 aa).

109–115 (GTHGKTT) serves as a coordination point for ATP.

This sequence belongs to the MurCDEF family.

It localises to the cytoplasm. The enzyme catalyses UDP-N-acetyl-alpha-D-muramate + L-alanine + ATP = UDP-N-acetyl-alpha-D-muramoyl-L-alanine + ADP + phosphate + H(+). Its pathway is cell wall biogenesis; peptidoglycan biosynthesis. Cell wall formation. The polypeptide is UDP-N-acetylmuramate--L-alanine ligase (Caldicellulosiruptor bescii (strain ATCC BAA-1888 / DSM 6725 / KCTC 15123 / Z-1320) (Anaerocellum thermophilum)).